The chain runs to 296 residues: ADP-forming sulfoacetate-CoA ligase subunit SqwL (296 aa).

CoA-binding positions include 17–20 (TGSE), K43, and 96–98 (IAD). Catalysis depends on H251, which acts as the Tele-phosphohistidine intermediate.

Belongs to the succinate/malate CoA ligase alpha subunit family. Forms a complex with SqwK.

The enzyme catalyses sulfoacetate + ATP + CoA = sulfoacetyl-CoA + ADP + phosphate. Its function is as follows. Part of a variant of the sulfo-TK pathway, a D-sulfoquinovose degradation pathway that produces sulfoacetate. Hydrolyzes sulfoacetyl-coenzyme A (sulfoacetyl-CoA) to produce sulfoacetate and CoA coupled with the phosphorylation of ADP to generate ATP. Cannot use succinate, acetate or 3-hydroxypropionate, and shows only residual activities with malonate and 3-sulfopropanoate. The sequence is that of ADP-forming sulfoacetate-CoA ligase subunit SqwL from Acholeplasma sp.